Here is a 264-residue protein sequence, read N- to C-terminus: Small ribosomal subunit protein eS1B (264 aa).

Residues 233–264 (GEGGGSGKPAADETGAKVERADGYEPPVQESV) form a disordered region. The span at 242 to 255 (AADETGAKVERADG) shows a compositional bias: basic and acidic residues.

This sequence belongs to the eukaryotic ribosomal protein eS1 family. In terms of assembly, component of the small ribosomal subunit. Mature ribosomes consist of a small (40S) and a large (60S) subunit. The 40S subunit contains about 33 different proteins and 1 molecule of RNA (18S). The 60S subunit contains about 49 different proteins and 3 molecules of RNA (28S, 5.8S and 5S). Part of the small subunit (SSU) processome, composed of more than 70 proteins and the RNA chaperone small nucleolar RNA (snoRNA) U3.

The protein localises to the cytoplasm. Its subcellular location is the nucleus. It is found in the nucleolus. In terms of biological role, component of the small ribosomal subunit. The ribosome is a large ribonucleoprotein complex responsible for the synthesis of proteins in the cell. Part of the small subunit (SSU) processome, first precursor of the small eukaryotic ribosomal subunit. During the assembly of the SSU processome in the nucleolus, many ribosome biogenesis factors, an RNA chaperone and ribosomal proteins associate with the nascent pre-rRNA and work in concert to generate RNA folding, modifications, rearrangements and cleavage as well as targeted degradation of pre-ribosomal RNA by the RNA exosome. May play a role during erythropoiesis. This chain is Small ribosomal subunit protein eS1B (rps3a-b), found in Xenopus laevis (African clawed frog).